A 509-amino-acid chain; its full sequence is 2,3-bisphosphoglycerate-independent phosphoglycerate mutase (509 aa).

Asp11 contributes to the Mn(2+) binding site. Residue Tyr35 is modified to Phosphotyrosine. Ser61 contributes to the Mn(2+) binding site. The active-site Phosphoserine intermediate is the Ser61. Substrate-binding positions include His122, Arg152–Asp153, Arg184, Arg190, Arg260–Arg263, and Lys335. Mn(2+) is bound by residues Asp402, His406, Asp443, His444, and His461.

The protein belongs to the BPG-independent phosphoglycerate mutase family. Monomer. The cofactor is Mn(2+).

The catalysed reaction is (2R)-2-phosphoglycerate = (2R)-3-phosphoglycerate. The protein operates within carbohydrate degradation; glycolysis; pyruvate from D-glyceraldehyde 3-phosphate: step 3/5. Essential for rapid growth and for sporulation. Catalyzes the interconversion of 2-phosphoglycerate and 3-phosphoglycerate. This chain is 2,3-bisphosphoglycerate-independent phosphoglycerate mutase, found in Bacillus anthracis.